A 230-amino-acid polypeptide reads, in one-letter code: RNA chaperone ProQ (230 aa).

The tract at residues 104–176 (AEAKARVQAQ…APRQNTEKLT (73 aa)) is disordered. The segment covering 115–132 (AEQRAKKREAEGDKETSK) has biased composition (basic and acidic residues).

The protein belongs to the ProQ family.

The protein localises to the cytoplasm. In terms of biological role, RNA chaperone with significant RNA binding, RNA strand exchange and RNA duplexing activities. May regulate ProP activity through an RNA-based, post-transcriptional mechanism. This chain is RNA chaperone ProQ, found in Proteus mirabilis (strain HI4320).